We begin with the raw amino-acid sequence, 221 residues long: Probable GTP-binding protein EngB (221 aa).

One can recognise an EngB-type G domain in the interval 32–205 (GIPQIAFAGR…RKIVDSLITT (174 aa)). Residues 40–47 (GRSNAGKS), 67–71 (GKTKL), 85–88 (DLPG), 152–155 (TKID), and 184–186 (VSN) each bind GTP. Ser-47 and Thr-69 together coordinate Mg(2+).

The protein belongs to the TRAFAC class TrmE-Era-EngA-EngB-Septin-like GTPase superfamily. EngB GTPase family. Mg(2+) is required as a cofactor.

Its function is as follows. Necessary for normal cell division and for the maintenance of normal septation. This chain is Probable GTP-binding protein EngB, found in Leptospira borgpetersenii serovar Hardjo-bovis (strain JB197).